The following is a 1093-amino-acid chain: MPAAGSNEPDGVLSYQRPDEEAVVDQGGTSTILNIHYEKEELEGHRTLYVGVRMPLGRQSHRHHRTHGQKHRRRGRGKGASQGEEGLEALAHDTPSQRVQFILGTEEDEEHVPHELFTELDEICMKEGEDAEWKETARWLKFEEDVEDGGERWSKPYVATLSLHSLFELRSCLINGTVLLDMHANSIEEISDLILDQQELSSDLNDSMRVKVREALLKKHHHQNEKKRNNLIPIVRSFAEVGKKQSDPHLMDKHGQTVSPQSVPTTNLEVKNGVNCEHSPVDLSKVDLHFMKKIPTGAEASNVLVGEVDILDRPIVAFVRLSPAVLLSGLTEVPIPTRFLFILLGPVGKGQQYHEIGRSMATIMTDEIFHDVAYKAKERDDLLAGIDEFLDQVTVLPPGEWDPSIRIEPPKNVPSQEKRKMPGVPNGNVCHIEQEPHGGHSGPELQRTGRLFGGLVLDIKRKAPWYWSDYRDALSLQCLASFLFLYCACMSPVITFGGLLGEATEGRISAIESLFGASMTGIAYSLFAGQALTILGSTGPVLVFEKILFKFCKDYALSYLSLRACIGLWTAFLCIVLVATDASSLVCYITRFTEEAFASLICIIFIYEAIEKLIHLAETYPIHMHSQLDHLSLYYCRCTLPENPNNHTLQYWKDHNIVTAEVHWANLTVSECQEMHGEFMGSACGHHGPYTPDVLFWSCILFFTTFILSSTLKTFKTSRYFPTRVRSMVSDFAVFLTIFTMVIIDFLIGVPSPKLQVPSVFKPTRDDRGWIINPIGPNPWWTVIAAIIPALLCTILIFMDQQITAVIINRKEHKLKKGCGYHLDLLMVAIMLGVCSIMGLPWFVAATVLSITHVNSLKLESECSAPGEQPKFLGIREQRVTGLMIFVLMGCSVFMTAILKFIPMPVLYGVFLYMGVSSLQGIQFFDRLKLFGMPAKHQPDFIYLRHVPLRKVHLFTLIQLTCLVLLWVIKASPAAIVFPMMVLALVFVRKVMDLCFSKRELSWLDDLMPESKKKKLDDAKKKAKEEEEAEKMLEIGGDKFPLESRKLLSSPGKNISCRCDPSEINISDEMPKTTVWKALSMNSGNAKEKSLFN.

Disordered regions lie at residues 1-25 (MPAA…AVVD) and 55-95 (PLGR…HDTP). The Extracellular segment spans residues 1–478 (MPAAGSNEPD…DYRDALSLQC (478 aa)). Residues 59-77 (QSHRHHRTHGQKHRRRGRG) show a composition bias toward basic residues. F167 and L169 together coordinate Zn(2+). The VTVLP; mediates dimerization signature appears at 340 to 344 (LFILL). A helical membrane pass occupies residues 479-499 (LASFLFLYCACMSPVITFGGL). The Cytoplasmic portion of the chain corresponds to 500–523 (LGEATEGRISAIESLFGASMTGIA). Residues 524–544 (YSLFAGQALTILGSTGPVLVF) form a helical membrane-spanning segment. Residues 545-565 (EKILFKFCKDYALSYLSLRAC) lie on the Extracellular side of the membrane. The helical transmembrane segment at 566–586 (IGLWTAFLCIVLVATDASSLV) threads the bilayer. Over 587 to 595 (CYITRFTEE) the chain is Cytoplasmic. Residues 596–616 (AFASLICIIFIYEAIEKLIHL) form a helical membrane-spanning segment. Topologically, residues 617–687 (AETYPIHMHS…EFMGSACGHH (71 aa)) are extracellular. 2 disulfides stabilise this stretch: C636–C684 and C638–C672. Residue N646 is glycosylated (N-linked (GlcNAc) asparagine). Residues 688-708 (GPYTPDVLFWSCILFFTTFIL) traverse the membrane as a helical segment. At 709–731 (SSTLKTFKTSRYFPTRVRSMVSD) the chain is on the cytoplasmic side. Residues 732-752 (FAVFLTIFTMVIIDFLIGVPS) form a helical membrane-spanning segment. At 753–778 (PKLQVPSVFKPTRDDRGWIINPIGPN) the chain is on the extracellular side. A helical transmembrane segment spans residues 779-799 (PWWTVIAAIIPALLCTILIFM). Over 800–824 (DQQITAVIINRKEHKLKKGCGYHLD) the chain is Cytoplasmic. The chain crosses the membrane as a helical span at residues 825 to 845 (LLMVAIMLGVCSIMGLPWFVA). At 846 to 881 (ATVLSITHVNSLKLESECSAPGEQPKFLGIREQRVT) the chain is on the extracellular side. A helical membrane pass occupies residues 882–902 (GLMIFVLMGCSVFMTAILKFI). The Cytoplasmic portion of the chain corresponds to 903 to 904 (PM). A helical membrane pass occupies residues 905–925 (PVLYGVFLYMGVSSLQGIQFF). The Extracellular portion of the chain corresponds to 926 to 962 (DRLKLFGMPAKHQPDFIYLRHVPLRKVHLFTLIQLTC). Residues 963–983 (LVLLWVIKASPAAIVFPMMVL) form a helical membrane-spanning segment. Over 984 to 1093 (ALVFVRKVMD…GNAKEKSLFN (110 aa)) the chain is Cytoplasmic. Residues 1010–1036 (ESKKKKLDDAKKKAKEEEEAEKMLEIG) are a coiled coil.

This sequence belongs to the anion exchanger (TC 2.A.31) family. Homodimer. As to expression, expressed in the pyramidal cells of the hippocampus (at protein level). Highly expressed in all major regions of the brain, spinal column and in testis, and moderate levels in trachea, thyroid and medulla region of kidney. Low expression levels observed in pancreas and kidney cortex. Expressed in the brain. In terms of tissue distribution, expressed in the brain, heart and kidney.

Its subcellular location is the apical cell membrane. It localises to the basolateral cell membrane. It is found in the cytoplasmic vesicle. The protein localises to the secretory vesicle. The protein resides in the synaptic vesicle membrane. Its subcellular location is the cell membrane. It carries out the reaction 2 hydrogencarbonate(out) + chloride(in) + Na(+)(out) = 2 hydrogencarbonate(in) + chloride(out) + Na(+)(in). With respect to regulation, activity is inhibited by 4,4'-Di-isothiocyanatostilbene-2,2'-disulfonic acid (DIDS - an inhibitor of several anion channels and transporters). Its activity is regulated as follows. Activity is inhibited by 4,4'-Di-isothiocyanatostilbene-2,2'-disulfonic acid (DIDS - an inhibitor of several anion channels and transporters). Zinc-binding negatively regulates its activity. Mediates electroneutral sodium- and carbonate-dependent chloride-HCO3(-) exchange with a Na(+):HCO3(-) stoichiometry of 2:1. Plays a major role in pH regulation in neurons. Mediates sodium reabsorption in the renal cortical collecting ducts. This chain is Electroneutral sodium bicarbonate exchanger 1, found in Homo sapiens (Human).